We begin with the raw amino-acid sequence, 679 residues long: UvrABC system protein C (679 aa).

The region spanning 65 to 143 (NSPGVYRMLN…IKRLRPRFNV (79 aa)) is the GIY-YIG domain. The UVR domain occupies 253–288 (QKVKSHMAEAMNQAAEDLDFERAAIYRDRLAALSHV).

The protein belongs to the UvrC family. As to quaternary structure, interacts with UvrB in an incision complex.

The protein localises to the cytoplasm. Its function is as follows. The UvrABC repair system catalyzes the recognition and processing of DNA lesions. UvrC both incises the 5' and 3' sides of the lesion. The N-terminal half is responsible for the 3' incision and the C-terminal half is responsible for the 5' incision. This chain is UvrABC system protein C, found in Rhizobium etli (strain ATCC 51251 / DSM 11541 / JCM 21823 / NBRC 15573 / CFN 42).